Here is a 156-residue protein sequence, read N- to C-terminus: Cell division protein SepF (156 aa).

The interval 30 to 49 (NAAAPSTTETSVVRQDDRPK) is disordered.

This sequence belongs to the SepF family. In terms of assembly, homodimer. Interacts with FtsZ.

It is found in the cytoplasm. Its function is as follows. Cell division protein that is part of the divisome complex and is recruited early to the Z-ring. Probably stimulates Z-ring formation, perhaps through the cross-linking of FtsZ protofilaments. Its function overlaps with FtsA. This is Cell division protein SepF from Exiguobacterium sp. (strain ATCC BAA-1283 / AT1b).